A 346-amino-acid chain; its full sequence is Dihydroorotase (346 aa).

The Zn(2+) site is built by His-17 and His-19. Residues 19 to 21 (HLR) and Asn-45 contribute to the substrate site. Residues Lys-103, His-140, and His-178 each contribute to the Zn(2+) site. Lys-103 carries the N6-carboxylysine modification. His-140 is a binding site for substrate. Residue Leu-223 coordinates substrate. Asp-251 is a binding site for Zn(2+). Residue Asp-251 is part of the active site. Substrate is bound by residues His-255 and Ala-267.

This sequence belongs to the metallo-dependent hydrolases superfamily. DHOase family. Class II DHOase subfamily. As to quaternary structure, homodimer. The cofactor is Zn(2+).

It catalyses the reaction (S)-dihydroorotate + H2O = N-carbamoyl-L-aspartate + H(+). It functions in the pathway pyrimidine metabolism; UMP biosynthesis via de novo pathway; (S)-dihydroorotate from bicarbonate: step 3/3. Its function is as follows. Catalyzes the reversible cyclization of carbamoyl aspartate to dihydroorotate. The sequence is that of Dihydroorotase from Synechococcus sp. (strain RCC307).